Here is a 23-residue protein sequence, read N- to C-terminus: Major prohead-scaffolding core protein Gp22 (23 aa).

The interval 1–23 (KAEEEVEKNKEEAEEKAEKKIAE) is disordered. A compositionally biased stretch (basic and acidic residues) spans 7 to 23 (EKNKEEAEEKAEKKIAE).

Its function is as follows. Gp22 functions in head assembly. Internal peptide VII: Cleavage product of Gp22 that is incorporated into the mature phage head. This is Major prohead-scaffolding core protein Gp22 (22) from Enterobacteria phage T6 (Bacteriophage T6).